The primary structure comprises 418 residues: Histidine--tRNA ligase (418 aa).

The protein belongs to the class-II aminoacyl-tRNA synthetase family. Homodimer.

Its subcellular location is the cytoplasm. The enzyme catalyses tRNA(His) + L-histidine + ATP = L-histidyl-tRNA(His) + AMP + diphosphate + H(+). The chain is Histidine--tRNA ligase from Dehalococcoides mccartyi (strain ATCC BAA-2266 / KCTC 15142 / 195) (Dehalococcoides ethenogenes (strain 195)).